Here is a 421-residue protein sequence, read N- to C-terminus: Serine hydroxymethyltransferase (421 aa).

Residues Leu121 and 125–127 (GHL) contribute to the (6S)-5,6,7,8-tetrahydrofolate site. Lys230 bears the N6-(pyridoxal phosphate)lysine mark. Residue 355–357 (SPF) participates in (6S)-5,6,7,8-tetrahydrofolate binding.

It belongs to the SHMT family. Homodimer. Requires pyridoxal 5'-phosphate as cofactor.

It is found in the cytoplasm. The catalysed reaction is (6R)-5,10-methylene-5,6,7,8-tetrahydrofolate + glycine + H2O = (6S)-5,6,7,8-tetrahydrofolate + L-serine. It participates in one-carbon metabolism; tetrahydrofolate interconversion. It functions in the pathway amino-acid biosynthesis; glycine biosynthesis; glycine from L-serine: step 1/1. Catalyzes the reversible interconversion of serine and glycine with tetrahydrofolate (THF) serving as the one-carbon carrier. This reaction serves as the major source of one-carbon groups required for the biosynthesis of purines, thymidylate, methionine, and other important biomolecules. Also exhibits THF-independent aldolase activity toward beta-hydroxyamino acids, producing glycine and aldehydes, via a retro-aldol mechanism. The sequence is that of Serine hydroxymethyltransferase from Cellvibrio japonicus (strain Ueda107) (Pseudomonas fluorescens subsp. cellulosa).